The sequence spans 413 residues: Multifunctional CCA protein (413 aa).

The ATP site is built by G8 and R11. CTP-binding residues include G8 and R11. Residues D21 and D23 each coordinate Mg(2+). 3 residues coordinate ATP: R91, R143, and R146. Residues R91, R143, and R146 each coordinate CTP. One can recognise an HD domain in the interval 232-333 (TGVHVMMVID…VRLLERADAL (102 aa)).

The protein belongs to the tRNA nucleotidyltransferase/poly(A) polymerase family. Bacterial CCA-adding enzyme type 1 subfamily. Monomer. Can also form homodimers and oligomers. The cofactor is Mg(2+). Requires Ni(2+) as cofactor.

The catalysed reaction is a tRNA precursor + 2 CTP + ATP = a tRNA with a 3' CCA end + 3 diphosphate. It catalyses the reaction a tRNA with a 3' CCA end + 2 CTP + ATP = a tRNA with a 3' CCACCA end + 3 diphosphate. In terms of biological role, catalyzes the addition and repair of the essential 3'-terminal CCA sequence in tRNAs without using a nucleic acid template. Adds these three nucleotides in the order of C, C, and A to the tRNA nucleotide-73, using CTP and ATP as substrates and producing inorganic pyrophosphate. tRNA 3'-terminal CCA addition is required both for tRNA processing and repair. Also involved in tRNA surveillance by mediating tandem CCA addition to generate a CCACCA at the 3' terminus of unstable tRNAs. While stable tRNAs receive only 3'-terminal CCA, unstable tRNAs are marked with CCACCA and rapidly degraded. In Burkholderia mallei (strain NCTC 10247), this protein is Multifunctional CCA protein.